The chain runs to 370 residues: MEILRVEPTPSPNTMKIVLSNKREDNKSNTFTYIEEQQPQFINDLLAIDGVKSIFYVMDFLAIDKEPKSDWEVVLPQITSTLNNESFIDSSHKPDEHYGEIKAEALMFKGIPYQIKLTTTSDESRKQLPDYFVESMLKAQKDGDNVVFLRKWQDLGVRYGDLEEVMNEVYEEIIALYPSEKLASLVQTALETDIVIPQQQYHHVTLNEYKEATDWKDKLRMLKEFPTPTLQDIDLLDEALQEDKAPLRRQAIVLIGMIEEKEILPYLYKGLRDKNPAVRRTAGDCLSDLGFKEALPEMENALNDPQKIVRWRAAMFLFDEGGPEQLPSLKSHANDPAYEVKLQIEMAISRIENGDEALGSVWKQIANRNK.

Belongs to the CvfC family.

The sequence is that of Conserved virulence factor C (cvfC) from Staphylococcus haemolyticus (strain JCSC1435).